A 566-amino-acid polypeptide reads, in one-letter code: Type 2 DNA topoisomerase 6 subunit B (566 aa).

ATP contacts are provided by residues Asn-48, Asp-80, 101 to 102 (TK), 111 to 118 (GQQGIGIS), and Lys-475.

This sequence belongs to the TOP6B family. In terms of assembly, homodimer. Heterotetramer of two Top6A and two Top6B chains.

It catalyses the reaction ATP-dependent breakage, passage and rejoining of double-stranded DNA.. Its function is as follows. Relaxes both positive and negative superturns and exhibits a strong decatenase activity. This is Type 2 DNA topoisomerase 6 subunit B from Thermococcus sibiricus (strain DSM 12597 / MM 739).